The sequence spans 439 residues: Microfibrillar-associated protein 1 (439 aa).

Disordered stretches follow at residues 1–27 (MSVPSALMKQPPIQSTAGAVPVRNEKG) and 39–200 (YVSG…PRLK). Serine 2 is subject to N-acetylserine. 2 positions are modified to phosphoserine: serine 52 and serine 53. Basic and acidic residues predominate over residues 61-70 (QFIKKAKEQE). A Glycyl lysine isopeptide (Lys-Gly) (interchain with G-Cter in SUMO2) cross-link involves residue lysine 67. A compositionally biased stretch (acidic residues) spans 71 to 81 (AEPEEQEEDSS). Residues serine 94, serine 116, serine 118, serine 132, and serine 133 each carry the phosphoserine modification. Composition is skewed to acidic residues over residues 112 to 122 (VVGESDSEVEG) and 131 to 144 (DSSEEEEEEIDDEE). A compositionally biased stretch (basic and acidic residues) spans 145–163 (IERRRGMMRQRAQERKNEE). Acidic residues predominate over residues 178–195 (ESESESEYEEYTDSEDEM). Lysine 249 is covalently cross-linked (Glycyl lysine isopeptide (Lys-Gly) (interchain with G-Cter in SUMO2)). Position 267 is a phosphothreonine (threonine 267). Lysine 357 participates in a covalent cross-link: Glycyl lysine isopeptide (Lys-Gly) (interchain with G-Cter in SUMO2). Phosphoserine is present on serine 361. Glycyl lysine isopeptide (Lys-Gly) (interchain with G-Cter in SUMO2) cross-links involve residues lysine 371, lysine 381, lysine 415, and lysine 418. Serine 432 is modified (phosphoserine).

The protein belongs to the MFAP1 family. In terms of assembly, component of the spliceosome B complex. Interacts with PRPF38A (via N-terminal interaction domain).

It localises to the nucleus. Its function is as follows. Involved in pre-mRNA splicing as a component of the spliceosome. This Homo sapiens (Human) protein is Microfibrillar-associated protein 1.